We begin with the raw amino-acid sequence, 308 residues long: GMP synthase [glutamine-hydrolyzing] subunit B (308 aa).

Residues 1-185 form the GMPS ATP-PPase domain; the sequence is MNWEKFVEEK…LGLPEKIYNR (185 aa). 28 to 34 provides a ligand contact to ATP; that stretch reads SGGVDSS.

In terms of assembly, heterodimer composed of a glutamine amidotransferase subunit (A) and a GMP-binding subunit (B).

The catalysed reaction is XMP + L-glutamine + ATP + H2O = GMP + L-glutamate + AMP + diphosphate + 2 H(+). The protein operates within purine metabolism; GMP biosynthesis; GMP from XMP (L-Gln route): step 1/1. Its function is as follows. Catalyzes the synthesis of GMP from XMP. In Pyrococcus abyssi (strain GE5 / Orsay), this protein is GMP synthase [glutamine-hydrolyzing] subunit B (guaAB).